We begin with the raw amino-acid sequence, 541 residues long: Chaperonin GroEL 2 (541 aa).

Residues 29–32 (TLGP), 86–90 (DGTTT), glycine 413, 476–478 (NAA), and aspartate 492 contribute to the ATP site.

The protein belongs to the chaperonin (HSP60) family. Forms a cylinder of 14 subunits composed of two heptameric rings stacked back-to-back. Interacts with the co-chaperonin GroES.

It localises to the secreted. Its subcellular location is the capsule. It is found in the cell surface. The protein localises to the cell wall. The enzyme catalyses ATP + H2O + a folded polypeptide = ADP + phosphate + an unfolded polypeptide.. Its function is as follows. Together with its co-chaperonin GroES, plays an essential role in assisting protein folding. The GroEL-GroES system forms a nano-cage that allows encapsulation of the non-native substrate proteins and provides a physical environment optimized to promote and accelerate protein folding. In Mycolicibacterium gilvum (strain PYR-GCK) (Mycobacterium gilvum (strain PYR-GCK)), this protein is Chaperonin GroEL 2.